The sequence spans 535 residues: Phosphoenolpyruvate carboxykinase (ATP) (535 aa).

Positions 59, 201, and 207 each coordinate substrate. Residues K207, H226, and 243-251 (GLSGTGKTT) each bind ATP. The Mn(2+) site is built by K207 and H226. D264 contributes to the Mn(2+) binding site. Residues E292, R328, 444–445 (RI), and T450 contribute to the ATP site. R328 provides a ligand contact to substrate.

Belongs to the phosphoenolpyruvate carboxykinase (ATP) family. The cofactor is Mn(2+).

It localises to the cytoplasm. It catalyses the reaction oxaloacetate + ATP = phosphoenolpyruvate + ADP + CO2. Its pathway is carbohydrate biosynthesis; gluconeogenesis. Involved in the gluconeogenesis. Catalyzes the conversion of oxaloacetate (OAA) to phosphoenolpyruvate (PEP) through direct phosphoryl transfer between the nucleoside triphosphate and OAA. This is Phosphoenolpyruvate carboxykinase (ATP) from Bacteroides fragilis (strain ATCC 25285 / DSM 2151 / CCUG 4856 / JCM 11019 / LMG 10263 / NCTC 9343 / Onslow / VPI 2553 / EN-2).